Consider the following 82-residue polypeptide: MKRTNMKKARMEQSRRPKKNPLKAEGIETVDYKNYDLLRKFISERGKIRSRRVTGLTPQQQRQVATAVKNAREMALLPFHSR.

The segment at 1 to 24 (MKRTNMKKARMEQSRRPKKNPLKA) is disordered.

This sequence belongs to the bacterial ribosomal protein bS18 family. In terms of assembly, part of the 30S ribosomal subunit. Forms a tight heterodimer with protein bS6.

In terms of biological role, binds as a heterodimer with protein bS6 to the central domain of the 16S rRNA, where it helps stabilize the platform of the 30S subunit. The polypeptide is Small ribosomal subunit protein bS18 (Corynebacterium jeikeium (strain K411)).